The chain runs to 380 residues: Cytochrome b (380 aa).

The next 4 helical transmembrane spans lie at 34-54 (FGSLLGICLITQILTGLLLAM), 78-99 (WLIRNLHANGASFFFICIYFHI), 114-134 (WNTGIILLLTLMATAFVGYVL), and 179-199 (FFALHFLLPFMITGLTLIHLT). Residues H84 and H98 each coordinate heme b. Residues H183 and H197 each coordinate heme b. H202 is an a ubiquinone binding site. Transmembrane regions (helical) follow at residues 227–247 (TKDILGFALMLLPLTTLALFS), 289–309 (LGGVLALAASVLILFLSPLLH), 321–341 (LSQLLFWTLVANLLILTWIGS), and 348–368 (FIIIGQLASTTYFIILLILFP).

This sequence belongs to the cytochrome b family. The cytochrome bc1 complex contains 11 subunits: 3 respiratory subunits (MT-CYB, CYC1 and UQCRFS1), 2 core proteins (UQCRC1 and UQCRC2) and 6 low-molecular weight proteins (UQCRH/QCR6, UQCRB/QCR7, UQCRQ/QCR8, UQCR10/QCR9, UQCR11/QCR10 and a cleavage product of UQCRFS1). This cytochrome bc1 complex then forms a dimer. Heme b is required as a cofactor.

It localises to the mitochondrion inner membrane. Its function is as follows. Component of the ubiquinol-cytochrome c reductase complex (complex III or cytochrome b-c1 complex) that is part of the mitochondrial respiratory chain. The b-c1 complex mediates electron transfer from ubiquinol to cytochrome c. Contributes to the generation of a proton gradient across the mitochondrial membrane that is then used for ATP synthesis. The polypeptide is Cytochrome b (MT-CYB) (Pygoscelis papua (Gentoo penguin)).